A 2227-amino-acid chain; its full sequence is Genome polyprotein (2227 aa).

2 consecutive short sequence motifs ((L)YPX(n)L motif) follow at residues 167–171 (YPHGL) and 200–205 (YPVWEL). Residues 766 to 836 (MMSRIAAGDL…PRKMKGLFSQ (71 aa)) are involved in P1-2A pentamerization. The helical transmembrane segment at 1011 to 1031 (TVEIINTVLCFVKSGILLYVI) threads the bilayer. The membrane-penetrating ability stretch occupies residues 1043–1070 (IGLLRVMNYADIGCSVISCGKVFSKMLE). Positions 1127–1152 (KKKDILNILKDNQQKIEKAIEEADNF) form a coiled coil. Residues 1204 to 1366 (HQKLKNLGSI…SFFKNPHNDM (163 aa)) enclose the SF3 helicase domain. 1230–1237 (GKRGGGKS) provides a ligand contact to ATP. Residues 1462–1482 (WVAVGAAVGILGVLVGGWFVY) form a helical membrane-spanning segment. Tyr1499 is subject to O-(5'-phospho-RNA)-tyrosine. A Peptidase C3 domain is found at 1514 to 1728 (DPVESQSTLE…VAKLVTQEMF (215 aa)). Catalysis depends on for protease 3C activity residues His1563, Asp1603, and Cys1691. The RdRp catalytic domain maps to 1976 to 2097 (DVGLDLDFSA…VFSRDVQIDN (122 aa)).

It belongs to the picornaviridae polyprotein family. As to quaternary structure, homodimer. Homomultimer; probably interacts with membranes in a multimeric form. Seems to assemble into amyloid-like fibers. Homodimer. Monomer. Interacts with protein 3CD. In terms of assembly, interacts with host ACBD3. As to quaternary structure, interacts with protein 3AB. Interacts with human MAVS. In terms of assembly, homodimer; disulfide-linked. As to quaternary structure, homopentamer. Homooligomer. Interacts with capsid protein VP2. Interacts with capsid protein VP3. In terms of assembly, interacts with capsid protein VP1. Interacts with capsid protein VP3. As to quaternary structure, interacts with capsid protein VP1. Interacts with capsid protein VP2. Specific enzymatic cleavages by viral protease in vivo yield a variety of precursors and mature proteins. Polyprotein processing intermediates are produced, such as P1-2A which is a functional precursor of the structural proteins, VP0 which is a VP4-VP2 precursor, VP1-2A precursor, 3ABC precursor which is a stable and catalytically active precursor of 3A, 3B and 3C proteins, 3AB and 3CD precursors. The assembly signal 2A is removed from VP1-2A by a host protease, possibly host Cathepsin L. This cleavage occurs over a region of 3 amino-acids probably generating VP1 proteins with heterogeneous C-termini. Post-translationally, during virion maturation, immature virions are rendered infectious following cleavage of VP0 into VP4 and VP2. This maturation seems to be an autocatalytic event triggered by the presence of RNA in the capsid and is followed by a conformational change of the particle. In terms of processing, the assembly signal 2A is removed from VP1-2A by a host protease, possibly host Cathepsin L in naked virions. This cleavage does not occur in enveloped virions. This cleavage occurs over a region of 3 amino-acids probably generating VP1 proteins with heterogeneous C-termini. VPg is uridylylated prior to priming replication into VPg-pUpU. Post-translationally, unlike other picornaviruses, does not seem to be myristoylated.

The protein localises to the virion. Its subcellular location is the host endosome. It localises to the host multivesicular body. It is found in the host membrane. The protein resides in the host mitochondrion outer membrane. The protein localises to the host cytoplasm. Its subcellular location is the host cytoplasmic vesicle membrane. The enzyme catalyses RNA(n) + a ribonucleoside 5'-triphosphate = RNA(n+1) + diphosphate. It carries out the reaction a ribonucleoside 5'-triphosphate + H2O = a ribonucleoside 5'-diphosphate + phosphate + H(+). It catalyses the reaction Selective cleavage of Gln-|-Gly bond in the poliovirus polyprotein. In other picornavirus reactions Glu may be substituted for Gln, and Ser or Thr for Gly.. Capsid proteins VP1, VP2, and VP3 form a closed capsid enclosing the viral positive strand RNA genome. All these proteins contain a beta-sheet structure called beta-barrel jelly roll. Together they form an icosahedral capsid (T=3) composed of 60 copies of each VP1, VP2, and VP3, with a diameter of approximately 300 Angstroms. VP1 is situated at the 12 fivefold axes, whereas VP2 and VP3 are located at the quasi-sixfold axes. The naked capsid interacts with the host receptor HAVCR1 to provide virion attachment to and probably entry into the target cell. Functionally, VP0 precursor is a component of the immature procapsids. Its function is as follows. Plays a role in the assembly of the 12 pentamers into an icosahedral structure. Has not been detected in mature virions, supposedly owing to its small size. In terms of biological role, precursor component of immature procapsids that corresponds to an extended form of the structural protein VP1. After maturation, possibly by the host Cathepsin L, the assembly signal 2A is cleaved to give rise to the mature VP1 protein. Functions as a viroporin. Affects membrane integrity and causes an increase in membrane permeability. Involved in host intracellular membrane rearrangements probably to give rise to the viral factories. Does not disrupt calcium homeostasis or glycoprotein trafficking. Antagonizes the innate immune response of the host by suppressing IFN-beta synthesis, which it achieves by interfering with the RIG-I/IFIH1 pathway. Functionally, affects membrane integrity and causes an increase in membrane permeability. Its function is as follows. Associates with and induces structural rearrangements of intracellular membranes. Displays RNA-binding activity. In terms of biological role, the precursor 3ABC is targeted to the mitochondrial membrane where protease 3C activity cleaves and inhibits the host antiviral protein MAVS, thereby disrupting activation of IRF3 through the IFIH1/MDA5 pathway. In vivo, the protease activity of 3ABC precursor is more efficient in cleaving the 2BC precursor than that of protein 3C. The 3ABC precursor may therefore play a role in the proteolytic processing of the polyprotein. Possible viroporin. Interacts with the 3CD precursor and with RNA structures found at both the 5'- and 3'-termini of the viral genome. Since the 3AB precursor contains the hydrophobic domain 3A, it probably anchors the whole viral replicase complex to intracellular membranes on which viral RNA synthesis occurs. Functionally, may serve as membrane anchor to the 3AB and 3ABC precursors via its hydrophobic domain. May interact with RNA. Its function is as follows. Acts as a primer for viral RNA replication and remains covalently bound to viral genomic RNA. VPg is uridylylated prior to priming replication into VPg-pUpU. The VPg-pUpU is then used as primer on the genomic RNA poly(A) by the RNA-dependent RNA polymerase to replicate the viral genome. In terms of biological role, cysteine protease that generates mature viral proteins from the precursor polyprotein. In addition to its proteolytic activity, it binds to viral RNA, and thus influences viral genome replication. RNA and substrate bind cooperatively to the protease. Cleaves IKBKG/NEMO to impair innate immune signaling. Cleaves host PABPC1 which may participate in the switch of viral translation to RNA synthesis. Interacts with the 3AB precursor and with RNA structures found at both the 5'- and 3'-termini of the viral genome. Disrupts TLR3 signaling by degrading the host adapter protein TICAM1/TRIF. Functionally, RNA-directed RNA polymerase 3D-POL replicates genomic and antigenomic RNA by recognizing replications specific signals. The sequence is that of Genome polyprotein from Cercopithecus hamlyni (Owl-faced monkey).